Reading from the N-terminus, the 149-residue chain is Nucleoside diphosphate kinase (149 aa).

Residues lysine 9, phenylalanine 57, arginine 85, threonine 91, arginine 102, and asparagine 112 each contribute to the ATP site. Catalysis depends on histidine 115, which acts as the Pros-phosphohistidine intermediate.

This sequence belongs to the NDK family. As to quaternary structure, homotetramer. Mg(2+) serves as cofactor.

The protein localises to the cytoplasm. It catalyses the reaction a 2'-deoxyribonucleoside 5'-diphosphate + ATP = a 2'-deoxyribonucleoside 5'-triphosphate + ADP. The enzyme catalyses a ribonucleoside 5'-diphosphate + ATP = a ribonucleoside 5'-triphosphate + ADP. In terms of biological role, major role in the synthesis of nucleoside triphosphates other than ATP. The ATP gamma phosphate is transferred to the NDP beta phosphate via a ping-pong mechanism, using a phosphorylated active-site intermediate. The protein is Nucleoside diphosphate kinase of Herpetosiphon aurantiacus (strain ATCC 23779 / DSM 785 / 114-95).